Here is a 628-residue protein sequence, read N- to C-terminus: ATP-dependent zinc metalloprotease FtsH (628 aa).

Residues Met-1–Thr-7 are Stromal-facing. Residues Leu-8–Gly-28 traverse the membrane as a helical segment. Over Pro-29–Val-118 the chain is Lumenal. The chain crosses the membrane as a helical span at residues Trp-119–Phe-139. The Stromal segment spans residues Arg-140–Phe-628. Residue Gly-213–Thr-220 coordinates ATP. A Zn(2+)-binding site is contributed by His-434. The active site involves Glu-435. Residues His-438 and Asp-512 each contribute to the Zn(2+) site.

In the central section; belongs to the AAA ATPase family. The protein in the C-terminal section; belongs to the peptidase M41 family. As to quaternary structure, homohexamer. Zn(2+) serves as cofactor.

The protein localises to the plastid. It localises to the chloroplast thylakoid membrane. In terms of biological role, acts as a processive, ATP-dependent zinc metallopeptidase. The chain is ATP-dependent zinc metalloprotease FtsH from Porphyra purpurea (Red seaweed).